Reading from the N-terminus, the 51-residue chain is Large ribosomal subunit protein eL39 (51 aa).

A compositionally biased stretch (basic residues) spans 1–19 (MSHNMKGQKKRLAKAHKQN). The segment at 1 to 23 (MSHNMKGQKKRLAKAHKQNSRVP) is disordered.

Belongs to the eukaryotic ribosomal protein eL39 family.

This chain is Large ribosomal subunit protein eL39, found in Methanosarcina mazei (strain ATCC BAA-159 / DSM 3647 / Goe1 / Go1 / JCM 11833 / OCM 88) (Methanosarcina frisia).